Here is a 358-residue protein sequence, read N- to C-terminus: Porphobilinogen deaminase, chloroplastic (358 aa).

A signal peptide spans 1 to 24; it reads MPPPPRCAATTAHHSLLGSPTCLA. Cysteine 290 carries the post-translational modification S-(dipyrrolylmethanemethyl)cysteine.

Belongs to the HMBS family. The cofactor is dipyrromethane.

The protein resides in the plastid. It is found in the chloroplast. The enzyme catalyses 4 porphobilinogen + H2O = hydroxymethylbilane + 4 NH4(+). The protein operates within porphyrin-containing compound metabolism; protoporphyrin-IX biosynthesis; coproporphyrinogen-III from 5-aminolevulinate: step 2/4. It functions in the pathway porphyrin-containing compound metabolism; chlorophyll biosynthesis. Its function is as follows. Tetrapolymerization of the monopyrrole PBG into the hydroxymethylbilane pre-uroporphyrinogen in several discrete steps. In Oryza sativa subsp. japonica (Rice), this protein is Porphobilinogen deaminase, chloroplastic (HEMC).